The primary structure comprises 22 residues: FVGAALKVLANVLPPVISWIKQ.

Glutamine 22 is subject to Glutamine amide.

As to expression, expressed by the skin glands.

The protein resides in the secreted. This Rana arvalis (Moor frog) protein is Melittin-related peptide FQ-22-1.